Consider the following 249-residue polypeptide: Molybdate/tungstate transport system permease protein WtpB (249 aa).

Residues 1-5 are Cytoplasmic-facing; it reads MEKFD. The helical transmembrane segment at 6–26 threads the bilayer; it reads IAMTVFLVMIFLFIFLPIIYM. Over 27 to 48 the chain is Extracellular; it reads LSNPGDLNQLLDKEVIEAFKTT. One can recognise an ABC transmembrane type-1 domain in the interval 45 to 240; sequence FKTTLLAGAV…LISIALFALL (196 aa). The helical transmembrane segment at 49-69 threads the bilayer; that stretch reads LLAGAVATLIALIFGIPTGYI. Residues 70–93 lie on the Cytoplasmic side of the membrane; sequence LARYDFKFKSFVEAVLDLPMAIPH. A helical membrane pass occupies residues 94-114; it reads SVIGIIILSFIYGIDIINFIG. Topologically, residues 115-116 are extracellular; sequence RY. Residues 117-137 traverse the membrane as a helical segment; that stretch reads VVDNFWGIVTVYLFVGIPFMV. Residues 138–177 lie on the Cytoplasmic side of the membrane; sequence NSIRDGFLSVDEEIEYVSRTLGASKIRTFFEISLPLIKNN. Residues 178-198 form a helical membrane-spanning segment; sequence IISGIILSFARGISEVGAILI. Residues 199-223 are Extracellular-facing; the sequence is IAYYPKTVPILIYERFMSFGLDASK. The chain crosses the membrane as a helical span at residues 224 to 244; that stretch reads PISVGMILISIALFALLRMFG. Residues 245 to 249 are Cytoplasmic-facing; it reads RMRGR.

This sequence belongs to the binding-protein-dependent transport system permease family. The complex is composed of two ATP-binding proteins (WtpC), two transmembrane proteins (WtpB) and a solute-binding protein (WtpA).

It is found in the cell membrane. Part of the ABC transporter complex WtpABC involved in molybdate/tungstate import. Probably responsible for the translocation of the substrate across the membrane. The polypeptide is Molybdate/tungstate transport system permease protein WtpB (wtpB) (Methanocaldococcus jannaschii (strain ATCC 43067 / DSM 2661 / JAL-1 / JCM 10045 / NBRC 100440) (Methanococcus jannaschii)).